We begin with the raw amino-acid sequence, 520 residues long: Alpha-1B adrenergic receptor (520 aa).

Over 1–45 (MNPDLDTGHNTSAPAHWGELKNANFTGPNQTSSNSTLPQLDITRA) the chain is Extracellular. N-linked (GlcNAc...) asparagine glycosylation is found at Asn-10, Asn-24, Asn-29, and Asn-34. Residues 46–70 (ISVGLVLGAFILFAIVGNILVILSV) traverse the membrane as a helical segment. Over 71–83 (ACNRHLRTPTNYF) the chain is Cytoplasmic. Residues 84-105 (IVNLAMADLLLSFTVLPFSAAL) traverse the membrane as a helical segment. The Extracellular portion of the chain corresponds to 106–115 (EVLGYWVLGR). The helical transmembrane segment at 116-141 (IFCDIWAAVDVLCCTASILSLCAISI) threads the bilayer. The cysteines at positions 118 and 195 are disulfide-linked. At 142 to 161 (DRYIGVRYSLQYPTLVTRRK) the chain is on the cytoplasmic side. A helical transmembrane segment spans residues 162-184 (AILALLSVWVLSTVISIGPLLGW). At 185–201 (KEPAPNDDKECGVTEEP) the chain is on the extracellular side. The helical transmembrane segment at 202–224 (FYALFSSLGSFYIPLAVILVMYC) threads the bilayer. Residues 225–295 (RVYIVAKRTT…FSREKKAAKT (71 aa)) are Cytoplasmic-facing. Thr-264 carries the post-translational modification Phosphothreonine. Residues 296-319 (LGIVVGMFILCWLPFFIALPLGSL) form a helical membrane-spanning segment. Residues 320–326 (FSTLKPP) are Extracellular-facing. A helical membrane pass occupies residues 327–351 (DAVFKVVFWLGYFNSCLNPIIYPCS). Residues 352–520 (SKEFKRAFVR…SNMPLAPGQF (169 aa)) are Cytoplasmic-facing. Cys-365 carries the S-palmitoyl cysteine lipid modification. The short motif at 368–380 (RGRGRRRRRRRRR) is the Nuclear localization signal element. Disordered stretches follow at residues 394-432 (GGSL…GYLG) and 479-520 (LTEP…PGQF).

Belongs to the G-protein coupled receptor 1 family. Adrenergic receptor subfamily. ADRA1B sub-subfamily. Homo- and heterooligomer. Heterooligomerizes with ADRA1B homooligomers in cardiac myocytes. Interacts with CAVIN4.

The protein localises to the nucleus membrane. It localises to the cell membrane. Its subcellular location is the cytoplasm. The protein resides in the membrane. It is found in the caveola. Its function is as follows. This alpha-adrenergic receptor mediates its action by association with G proteins that activate a phosphatidylinositol-calcium second messenger system. Its effect is mediated by G(q) and G(11) proteins. Nuclear ADRA1A-ADRA1B heterooligomers regulate phenylephrine (PE)-stimulated ERK signaling in cardiac myocytes. This chain is Alpha-1B adrenergic receptor (ADRA1B), found in Homo sapiens (Human).